A 79-amino-acid chain; its full sequence is RNA-binding protein Hfq (79 aa).

The 60-residue stretch at 10–69 folds into the Sm domain; the sequence is DPFLNALRKEHVPVSIYLVNGIKLQGNIESFDQYVVLLRNTVTQMVYKHAISTVVPARAV.

This sequence belongs to the Hfq family. As to quaternary structure, homohexamer.

RNA chaperone that binds small regulatory RNA (sRNAs) and mRNAs to facilitate mRNA translational regulation in response to envelope stress, environmental stress and changes in metabolite concentrations. Also binds with high specificity to tRNAs. This is RNA-binding protein Hfq from Ralstonia nicotianae (strain ATCC BAA-1114 / GMI1000) (Ralstonia solanacearum).